A 176-amino-acid chain; its full sequence is Ribosome maturation factor RimM (176 aa).

A PRC barrel domain is found at 104–176; sequence EDEYYFYEIL…KIIAKEMEWI (73 aa).

The protein belongs to the RimM family. Binds ribosomal protein uS19.

The protein localises to the cytoplasm. An accessory protein needed during the final step in the assembly of 30S ribosomal subunit, possibly for assembly of the head region. Essential for efficient processing of 16S rRNA. May be needed both before and after RbfA during the maturation of 16S rRNA. It has affinity for free ribosomal 30S subunits but not for 70S ribosomes. This is Ribosome maturation factor RimM from Thermotoga maritima (strain ATCC 43589 / DSM 3109 / JCM 10099 / NBRC 100826 / MSB8).